Here is a 455-residue protein sequence, read N- to C-terminus: SVGFKAGVKDYKLTYYTPDYKTKDTDILAAFRVTPQPGVPPEEAGAAVAAESSTGTWTTVWTDGLTSLDRYKGRCYHIEPVPGEESQFIAYVAYPLDLFEEGSVTNMFTSIVGNVFGFKALRALRLEDLRIPNAYVKTFQGPPHGIQVERDKLNKYGRPLLGCTIKPKLGLSAKNYGRAVYECLRGGLDFTKDDENVNSQPFMRWRDRFLFCAEALYKAQAETGEIKGHYLNATAGTCEEMIKRAVFARELGVPIVMHDYLTGGFTANTTLSHYCRDNGLLLHIHRAMHAVIDRQKNHGMHFRVLAKALRLSGGDHIHSGTVVGKLEGEREITLGFVDLLRDDFVEKDRSRGIYFTQDWVSLPGVLPVASGGIHVWHMPALTEIFGDDSVLQFGGGTLGHPWGNAPGAVANRVALEACVQARNEGRDLASEGNQIIREASKWSPELAAACEVWKE.

Position 5 is an N6,N6,N6-trimethyllysine (Lys-5). Substrate contacts are provided by Asn-114 and Thr-164. Lys-166 serves as the catalytic Proton acceptor. A substrate-binding site is contributed by Lys-168. Residues Lys-192, Asp-194, and Glu-195 each coordinate Mg(2+). N6-carboxylysine is present on Lys-192. His-285 serves as the catalytic Proton acceptor. Residues Arg-286, His-318, and Ser-370 each contribute to the substrate site.

It belongs to the RuBisCO large chain family. Type I subfamily. In terms of assembly, heterohexadecamer of 8 large chains and 8 small chains; disulfide-linked. The disulfide link is formed within the large subunit homodimers. Mg(2+) serves as cofactor. In terms of processing, the disulfide bond which can form in the large chain dimeric partners within the hexadecamer appears to be associated with oxidative stress and protein turnover.

Its subcellular location is the plastid. It is found in the chloroplast. The enzyme catalyses 2 (2R)-3-phosphoglycerate + 2 H(+) = D-ribulose 1,5-bisphosphate + CO2 + H2O. It carries out the reaction D-ribulose 1,5-bisphosphate + O2 = 2-phosphoglycolate + (2R)-3-phosphoglycerate + 2 H(+). Its function is as follows. RuBisCO catalyzes two reactions: the carboxylation of D-ribulose 1,5-bisphosphate, the primary event in carbon dioxide fixation, as well as the oxidative fragmentation of the pentose substrate in the photorespiration process. Both reactions occur simultaneously and in competition at the same active site. This is Ribulose bisphosphate carboxylase large chain from Lupinus nanus (Sky lupine).